The primary structure comprises 565 residues: Perivitellin-2 67 kDa subunit (565 aa).

The signal sequence occupies residues 1–26; sequence MSQLRWWVVSQVLLLIAICSLDHSEG. The 314-residue stretch at 27 to 340 folds into the MACPF domain; the sequence is ARVCPKIVPG…AKVANLDRLT (314 aa). Residues 387 to 565 are invertebrate MACPF Accessory Domain (IMAD); that stretch reads VPAWFSDRTT…CGMSWALIAK (179 aa).

In terms of assembly, perivitellin-2 is a dimer of heterodimers held together head-to-tail by non-covalent forces. The heterodimer is composed of the tachylectin subunit (31 kDa) and the MACPF subunit (67 kDa) that are disulfide-linked. PV2 is a very high density lipoprotein (VHDL). It contains 3.75% of lipids. The major lipid classes are free sterols and phospholipids and also have significant quantities of energy-providing triacylglycerides and free fatty acids. Produced by albumen secretory cells. Found in developing eggs.

The protein resides in the secreted. Its subcellular location is the target cell membrane. In terms of biological role, the egg defensive protein perivitellin-2 is a pore-forming two-subunit glycoprotein that affects both the nervous and digestive systems of mammals. In addition, it is a source of both structural and energetic molecules during embryonic development. The tachylectin subunit (31 kDa) binds target membranes while the MACPF subunit (67 kDa) disrupts lipid bilayers forming large pores (inner diameter of about 5.6 nm) altering the plasma membrance conductance. Both in vivo and in vitro, the protein shows wide pH range stability and is resistant to enzymatic proteolysis from gastrointestinal environments. It is cytotoxic to both epithelial and immune cells from the digestive system of mammals. It induces enterocyte death by a lytic mechanism and disrupts enterocyte monolayers in a dose-dependent manner. After oral administration to mice, it binds enterocytes and induces large dose-dependent morphological changes on their small intestine mucosa, reducing the absorptive surface. Additionally, it is detected in the Peyer's patches where it activates lymphoid follicles and triggers apoptosis. The toxin can also traverse the intestinal barrier and induce oral adaptive immunity with evidence of circulating antibody response. The toxin also shows hemagglutination properties thanks to the tachylectin subunit, but has no hemolytic activity. In addition to enterotoxin activity, the toxin also acts as a neurotoxin, since an intraperitoneal injection can induce paralysis of the mice rear limbs, followed by death. This chain is Perivitellin-2 67 kDa subunit, found in Pomacea maculata (Giant applesnail).